The chain runs to 239 residues: Aspartate/glutamate leucyltransferase (239 aa).

This sequence belongs to the R-transferase family. Bpt subfamily.

Its subcellular location is the cytoplasm. The catalysed reaction is N-terminal L-glutamyl-[protein] + L-leucyl-tRNA(Leu) = N-terminal L-leucyl-L-glutamyl-[protein] + tRNA(Leu) + H(+). The enzyme catalyses N-terminal L-aspartyl-[protein] + L-leucyl-tRNA(Leu) = N-terminal L-leucyl-L-aspartyl-[protein] + tRNA(Leu) + H(+). Its function is as follows. Functions in the N-end rule pathway of protein degradation where it conjugates Leu from its aminoacyl-tRNA to the N-termini of proteins containing an N-terminal aspartate or glutamate. The chain is Aspartate/glutamate leucyltransferase from Campylobacter jejuni (strain RM1221).